The chain runs to 212 residues: Protein-L-isoaspartate O-methyltransferase (212 aa).

Residue S60 is part of the active site.

This sequence belongs to the methyltransferase superfamily. L-isoaspartyl/D-aspartyl protein methyltransferase family.

The protein resides in the cytoplasm. The catalysed reaction is [protein]-L-isoaspartate + S-adenosyl-L-methionine = [protein]-L-isoaspartate alpha-methyl ester + S-adenosyl-L-homocysteine. Its function is as follows. Catalyzes the methyl esterification of L-isoaspartyl residues in peptides and proteins that result from spontaneous decomposition of normal L-aspartyl and L-asparaginyl residues. It plays a role in the repair and/or degradation of damaged proteins. This chain is Protein-L-isoaspartate O-methyltransferase, found in Methanococcus maripaludis (strain C6 / ATCC BAA-1332).